The following is a 281-amino-acid chain: 3-hydroxybutyryl-CoA dehydrogenase (281 aa).

This sequence belongs to the 3-hydroxyacyl-CoA dehydrogenase family.

The enzyme catalyses (3S)-3-hydroxybutanoyl-CoA + NADP(+) = acetoacetyl-CoA + NADPH + H(+). It functions in the pathway lipid metabolism; butanoate metabolism. This chain is 3-hydroxybutyryl-CoA dehydrogenase (hbd), found in Clostridioides difficile (Peptoclostridium difficile).